The chain runs to 692 residues: MSEAKSEMYYSLLEWFKTLNLSAAHNNAEELADGLALAQALNQFAADFFTDSWLAKIKASAVGSNWRLRMSNLKKVTQSLYDYYSEVMNYTLSDFVRPDLQLIAEKCDQVELERLLQLVLGCAVNCAKKQSYITEIMGLEEELQANIMRALQELESTGLVAGERSPSSSASGGAGSGGAVNSLSRNSLSVKALQEERDAMAQKCFETEKKMLLLLDEKTNLQQELQKIQQEFARLEINTTAIGDDGVSLGPVQAGSVRFNEMRRQLDLLKEELLQSEGAREDLKLKAVQQESDLVHMQQRIDELLKSSAEVTTLKDEVDVLRESNDKLKICEAQLDTYKKKLEDYNDLKKQIKILEERSADYVQQNAQFEDDAKRYANTKGQIELFKKEIQDLHSKLDIESGKNVKLEFDNKNLESKNLALQRAKESLVKERDNLRETVDELKCGHLTNNSGLTGCVEGTTMSRELQPTAMMDKIQRLEAENKALREGQGGQTALAQLLDDANKRCEHLRDQLKSANERILSLSHASQSDDPILKENEFAKQIKQLMELNEQKTLQLEEAVTQNASYQSKVIQLETSLSSREQEILACDAKYRKCVQKAKEIIKNIDPHIANAIDASALEKNMVDVVDEESKPKMSVMEEQLMTTAFYRLGVNAQRDAVDSKLAILMGSGQTFLARQRQSAPRKSLSAMKSK.

Positions 6–123 (SEMYYSLLEW…RLLQLVLGCA (118 aa)) constitute a Calponin-homology (CH) domain. A coiled-coil region spans residues 135-576 (EIMGLEEELQ…YQSKVIQLET (442 aa)). The segment at 161–180 (AGERSPSSSASGGAGSGGAV) is disordered.

This sequence belongs to the hook family. Homodimer. Interacts with microtubules via its N-terminus.

It localises to the cytoplasm. The protein resides in the cytoskeleton. Its subcellular location is the endosome. The protein localises to the synapse. Its function is as follows. Involved in endocytic trafficking by stabilizing organelles of the endocytic pathway. Probably acts as a cytoskeletal linker protein required to tether endosome vesicles to the cytoskeleton. Involved in modulation of endocytosis at stages required for down-regulation of membrane proteins that control synapse size. Not involved in synaptic vesicle recycling. Required in R7 cells for boss endocytosis into multivesicular bodies (MVBs). Has a role in regulating adult longevity. The sequence is that of Protein hook from Drosophila willistoni (Fruit fly).